A 592-amino-acid chain; its full sequence is Transmembrane 9 superfamily member 2 (592 aa).

Positions 1–24 are cleaved as a signal peptide; sequence MRTPTTILLLVGAILFSGAGYVRS. Over 25–229 the chain is Lumenal; that stretch reads DASDHRYKEG…SLPHHLEIHW (205 aa). The helical transmembrane segment at 230-250 threads the bilayer; that stretch reads FSIINSCVTVLLLTGFLATIL. Over 251-302 the chain is Cytoplasmic; that stretch reads MRVLKNDFMKYAQDEEAADDQEETGWKYIHGDVFRFPTHNSLFAASLGSGTQ. A helical membrane pass occupies residues 303–323; the sequence is LFTLTIFIFMLALVGVFYPYN. R324 is a topological domain (lumenal). The helical transmembrane segment at 325–345 threads the bilayer; the sequence is GALFTALVVIYALTSGIAGYT. Over 346-362 the chain is Cytoplasmic; the sequence is SASFYCQLEGKSWVRNL. The chain crosses the membrane as a helical span at residues 363 to 383; that stretch reads LLTGCLFCGPLFLTFCFLNTV. The Lumenal portion of the chain corresponds to 384 to 397; the sequence is AITYTATAALPFGT. Residues 398–418 form a helical membrane-spanning segment; sequence IVVIVLIWTLVTSPLLVLGGI. The Cytoplasmic segment spans residues 419 to 452; that stretch reads AGKNSKAEFQAPCRTTKYPREIPPLPWYRSAIPQ. A helical membrane pass occupies residues 453–473; sequence MAMAGFLPFSAIYIELYYIFA. Residues 474-485 are Lumenal-facing; sequence SVWGHRIYTIYS. A helical transmembrane segment spans residues 486 to 506; the sequence is ILFIVFIILIIVTAFITVALT. The Cytoplasmic portion of the chain corresponds to 507 to 521; the sequence is YFQLAAEDHQWWWRS. Residues 522–542 traverse the membrane as a helical segment; it reads FLCGGSTGLFIYAYCLYYYYA. The Lumenal portion of the chain corresponds to 543-553; the sequence is RSDMSGFMQTS. A helical transmembrane segment spans residues 554-574; sequence FFFGYMACICYGFFLMLGTVG. The Cytoplasmic segment spans residues 575 to 592; sequence FRAALLFVRHIYRSIKCE. Positions 581 to 586 match the Endoplasmic reticulum export signal motif; the sequence is FVRHIY. The Golgi retention signal signature appears at 590–592; the sequence is KCE.

It belongs to the nonaspanin (TM9SF) (TC 9.A.2) family.

The protein localises to the endosome membrane. It localises to the golgi apparatus membrane. The protein is Transmembrane 9 superfamily member 2 of Arabidopsis thaliana (Mouse-ear cress).